The following is a 326-amino-acid chain: Phospho-N-acetylmuramoyl-pentapeptide-transferase (326 aa).

10 helical membrane-spanning segments follow: residues 3 to 23, 51 to 71, 77 to 97, 113 to 133, 143 to 163, 175 to 195, 199 to 219, 225 to 245, 250 to 270, and 306 to 326; these read LPTKIFFTSFIFGFILSPYFI, TPTMGGVVILTSSLLPILFWV, ILLLVSITLSFALIGFIDDYL, ILIQFIVALVGMSVFKLYFTE, GIMIDFSYLYAPFAAFIVVGS, GLAATQIIASFVSLGLVAYMT, ISVILFCITFIGATLSFLWFN, IFMGDIGSLSIGAALGLTSVL, VLFAVIGVIFVIETLSVVIQV, and IVIKFLIITIVCSVFTVAFLL.

It belongs to the glycosyltransferase 4 family. MraY subfamily. Requires Mg(2+) as cofactor.

The protein localises to the cell membrane. It catalyses the reaction UDP-N-acetyl-alpha-D-muramoyl-L-alanyl-gamma-D-glutamyl-meso-2,6-diaminopimeloyl-D-alanyl-D-alanine + di-trans,octa-cis-undecaprenyl phosphate = di-trans,octa-cis-undecaprenyl diphospho-N-acetyl-alpha-D-muramoyl-L-alanyl-D-glutamyl-meso-2,6-diaminopimeloyl-D-alanyl-D-alanine + UMP. It participates in cell wall biogenesis; peptidoglycan biosynthesis. Its function is as follows. Catalyzes the initial step of the lipid cycle reactions in the biosynthesis of the cell wall peptidoglycan: transfers peptidoglycan precursor phospho-MurNAc-pentapeptide from UDP-MurNAc-pentapeptide onto the lipid carrier undecaprenyl phosphate, yielding undecaprenyl-pyrophosphoryl-MurNAc-pentapeptide, known as lipid I. The chain is Phospho-N-acetylmuramoyl-pentapeptide-transferase from Wolbachia sp. subsp. Brugia malayi (strain TRS).